We begin with the raw amino-acid sequence, 184 residues long: CASP-like protein 1U1 (184 aa).

At 1–30 (MSSTGTTLSASEGDKGFRNGAAPAKSKSHS) the chain is on the cytoplasmic side. A helical membrane pass occupies residues 31–51 (TIALLRLLAFAATLSAFVTMI). Residues 52–76 (TNKQKITIGPFTRWSKWHYSDAFMW) lie on the Extracellular side of the membrane. Residues 77–97 (FVVANCIAFIYLLFAAILGLI) form a helical membrane-spanning segment. Residues 98–111 (SHSPMLVKHLVILD) are Cytoplasmic-facing. A helical membrane pass occupies residues 112 to 132 (LIVSYMLFSAASAATAVAYIG). The Extracellular segment spans residues 133-154 (KNGISQPGWTAICGVFERYCHH). A helical membrane pass occupies residues 155–175 (VAGALVACFLGWLFLTIAVFL). The Cytoplasmic portion of the chain corresponds to 176–184 (GMRRSPAAV).

Belongs to the Casparian strip membrane proteins (CASP) family. In terms of assembly, homodimer and heterodimers.

Its subcellular location is the cell membrane. The sequence is that of CASP-like protein 1U1 from Marchantia polymorpha (Common liverwort).